A 678-amino-acid polypeptide reads, in one-letter code: THO complex subunit 5 homolog B (678 aa).

Disordered stretches follow at residues 1–37 and 294–329; these read MSSD…EEAE and ALFK…VQLD. A Nuclear localization signal motif is present at residues 7–10; that stretch reads KKRK. Basic and acidic residues predominate over residues 14–37; that stretch reads NRSEDGKRGRHDEQEGRYYSEEAE. Residues 301–314 are compositionally biased toward acidic residues; the sequence is DSQDDESDSDAEEE.

The protein belongs to the THOC5 family. Component of the THO subcomplex, which is composed of thoc1, thoc2, thoc3, thoc5, thoc6 and thoc7. Component of the transcription/export (TREX) complex at least composed of alyref/thoc4, ddx39b, sarnp/cip29, chtop and the THO subcomplex. Interacts with thoc7.

The protein localises to the nucleus. Its subcellular location is the nucleus speckle. The protein resides in the cytoplasm. Component of the THO subcomplex of the TREX complex which is thought to couple mRNA transcription, processing and nuclear export, and which specifically associates with spliced mRNA and not with unspliced pre-mRNA. Plays a key structural role in the oligomerization of the THO-ddx39b complex. TREX is recruited to spliced mRNAs by a transcription-independent mechanism, binds to mRNA upstream of the exon-junction complex (EJC) and is recruited in a splicing- and cap-dependent manner to a region near the 5' end of the mRNA where it functions in mRNA export to the cytoplasm via the TAP/NXF1 pathway. May be involved in cell differentiation. The chain is THO complex subunit 5 homolog B (thoc5-b) from Xenopus laevis (African clawed frog).